A 122-amino-acid polypeptide reads, in one-letter code: Ribonuclease P protein component (122 aa).

It belongs to the RnpA family. In terms of assembly, consists of a catalytic RNA component (M1 or rnpB) and a protein subunit.

The enzyme catalyses Endonucleolytic cleavage of RNA, removing 5'-extranucleotides from tRNA precursor.. In terms of biological role, RNaseP catalyzes the removal of the 5'-leader sequence from pre-tRNA to produce the mature 5'-terminus. It can also cleave other RNA substrates such as 4.5S RNA. The protein component plays an auxiliary but essential role in vivo by binding to the 5'-leader sequence and broadening the substrate specificity of the ribozyme. The polypeptide is Ribonuclease P protein component (Roseiflexus sp. (strain RS-1)).